A 401-amino-acid polypeptide reads, in one-letter code: Divinyl chlorophyllide a 8-vinyl-reductase, chloroplastic (401 aa).

Polar residues predominate over residues Met1–Leu10. Residues Met1–Arg26 form a disordered region. A chloroplast-targeting transit peptide spans Met1–Pro54.

It localises to the plastid. The protein resides in the chloroplast. The enzyme catalyses protochlorophyllide a + NADP(+) = 3,8-divinyl protochlorophyllide a + NADPH + H(+). It participates in porphyrin-containing compound metabolism; chlorophyll biosynthesis. Its function is as follows. Catalyzes the conversion of divinyl chlorophyllide to monovinyl chlorophyllide. Reduces the 8-vinyl group of the tetrapyrrole to an ethyl group using NADPH as the reductant. Can use (3,8-divinyl)-chlorophyllide a (DV-Chlidea) &gt; (3,8-divinyl)-chlorophyll a (DV-Chla) &gt; (3,8-divinyl)-protochlorophyllide a (DV-Pchlidea) &gt; (3,8-divinyl)-magnesium-protoporphyrin IX monomethyl ester (DV-MPE) &gt; (3,8-divinyl)-magnesium-protoporphyrin IX (DV-Mg-Proto) as substrates. In Zea mays (Maize), this protein is Divinyl chlorophyllide a 8-vinyl-reductase, chloroplastic (DVR).